We begin with the raw amino-acid sequence, 358 residues long: Peptide chain release factor 1 (358 aa).

Gln-233 carries the N5-methylglutamine modification.

This sequence belongs to the prokaryotic/mitochondrial release factor family. Methylated by PrmC. Methylation increases the termination efficiency of RF1.

It is found in the cytoplasm. Its function is as follows. Peptide chain release factor 1 directs the termination of translation in response to the peptide chain termination codons UAG and UAA. The chain is Peptide chain release factor 1 from Staphylococcus carnosus (strain TM300).